The following is a 626-amino-acid chain: Pheromone B alpha 3 receptor (626 aa).

7 helical membrane passes run 8–28 (LFPT…PWHL), 36–56 (CFFM…SIVW), 70–90 (ISIR…LCII), 113–133 (IIID…MQYI), 163–183 (IWPV…LIEF), 208–228 (LMAL…FVIV), and 271–291 (ELTR…FGFA). Disordered stretches follow at residues 363 to 409 (KQYT…SSPI), 481 to 509 (ATFT…SSSA), 524 to 549 (STTD…RLPS), and 571 to 626 (QDVA…RASV). Over residues 376-391 (SSSGFSSSESTRFGSS) the composition is skewed to low complexity. Over residues 574-606 (ATGTAAPTTTAPAPASTTIAPATTTATAPTTTA) the composition is skewed to low complexity.

It belongs to the G-protein coupled receptor 4 family.

The protein resides in the membrane. Its function is as follows. Receptor for the BAP3 pheromone, a prenylated mating factor. This chain is Pheromone B alpha 3 receptor (BAR3), found in Schizophyllum commune (strain H4-8 / FGSC 9210) (Split gill fungus).